The chain runs to 290 residues: Glycine--tRNA ligase alpha subunit (290 aa).

Belongs to the class-II aminoacyl-tRNA synthetase family. As to quaternary structure, tetramer of two alpha and two beta subunits.

Its subcellular location is the cytoplasm. It catalyses the reaction tRNA(Gly) + glycine + ATP = glycyl-tRNA(Gly) + AMP + diphosphate. This Brachyspira hyodysenteriae (strain ATCC 49526 / WA1) protein is Glycine--tRNA ligase alpha subunit.